The chain runs to 94 residues: MLQARIEEKQKEYELICKLRDSSNDMVQQIETLAAKLETLTDGSEAVATVLNNWPSIFESIQIASQHSGALVRIPPSTSNTNASATEQGDVEEV.

Residues 18–38 adopt a coiled-coil conformation; the sequence is KLRDSSNDMVQQIETLAAKLE. The tract at residues 72-94 is disordered; sequence VRIPPSTSNTNASATEQGDVEEV. A compositionally biased stretch (polar residues) spans 76–87; that stretch reads PSTSNTNASATE.

The protein belongs to the DASH complex DAD2 family. In terms of assembly, component of the DASH complex consisting of ask1, dad1, dad2, dad3, dad4, dam1, duo1, dad5, spc19 and spc34, with a stoichiometry of one copy of each subunit per complex. Multiple DASH complexes oligomerize to form a ring that encircles spindle microtubules and organizes the rod-like NDC80 complexes of the outer kinetochore. DASH complex oligomerization strengthens microtubule attachments. On cytoplasmic microtubules, DASH complexes appear to form patches instead of rings.

It localises to the nucleus. The protein localises to the cytoplasm. Its subcellular location is the cytoskeleton. It is found in the spindle. The protein resides in the chromosome. It localises to the centromere. The protein localises to the kinetochore. In terms of biological role, component of the DASH complex that connects microtubules with kinetochores and couples microtubule depolymerisation to chromosome movement; it is involved in retrieving kinetochores to the spindle poles before their re-orientation on the spindle in early mitosis and allows microtubule depolymerization to pull chromosomes apart and resist detachment during anaphase. Kinetochores, consisting of a centromere-associated inner segment and a microtubule-contacting outer segment, play a crucial role in chromosome segregation by mediating the physical connection between centromeric DNA and microtubules. Kinetochores also serve as an input point for the spindle assembly checkpoint, which delays anaphase until all chromosomes have bioriented on the mitotic spindle. The DASH complex mediates bipolar kinetochore-microtubule attachments and facilitates the formation of additional interactions between outer kinetochore components and spindle microtubules. During chromosome movement along the microtubule, it is required both for the sliding of kinetochores along the lateral side of the microtubule and also for microtubule end-on pulling on the kinetochore. Modulates cytoplasmic microtubule dynamics by tracking the plus-end of shortening microtubules and slowing their depolymerization. This chain is DASH complex subunit dad2, found in Schizosaccharomyces pombe (strain 972 / ATCC 24843) (Fission yeast).